We begin with the raw amino-acid sequence, 383 residues long: ATP phosphoribosyltransferase regulatory subunit (383 aa).

It belongs to the class-II aminoacyl-tRNA synthetase family. HisZ subfamily. As to quaternary structure, heteromultimer composed of HisG and HisZ subunits.

The protein localises to the cytoplasm. It functions in the pathway amino-acid biosynthesis; L-histidine biosynthesis; L-histidine from 5-phospho-alpha-D-ribose 1-diphosphate: step 1/9. In terms of biological role, required for the first step of histidine biosynthesis. May allow the feedback regulation of ATP phosphoribosyltransferase activity by histidine. This Paraburkholderia phymatum (strain DSM 17167 / CIP 108236 / LMG 21445 / STM815) (Burkholderia phymatum) protein is ATP phosphoribosyltransferase regulatory subunit.